We begin with the raw amino-acid sequence, 138 residues long: Putative pre-16S rRNA nuclease (138 aa).

It belongs to the YqgF nuclease family.

The protein resides in the cytoplasm. Functionally, could be a nuclease involved in processing of the 5'-end of pre-16S rRNA. The protein is Putative pre-16S rRNA nuclease of Escherichia coli O45:K1 (strain S88 / ExPEC).